A 159-amino-acid chain; its full sequence is 6,7-dimethyl-8-ribityllumazine synthase (159 aa).

5-amino-6-(D-ribitylamino)uracil-binding positions include Phe22, 57 to 59 (TYE), and 81 to 83 (TII). Residue 86 to 87 (ST) coordinates (2S)-2-hydroxy-3-oxobutyl phosphate. His89 serves as the catalytic Proton donor. 5-amino-6-(D-ribitylamino)uracil is bound at residue Met114. Position 128 (Arg128) interacts with (2S)-2-hydroxy-3-oxobutyl phosphate.

Belongs to the DMRL synthase family. Forms an icosahedral capsid composed of 60 subunits, arranged as a dodecamer of pentamers.

It catalyses the reaction (2S)-2-hydroxy-3-oxobutyl phosphate + 5-amino-6-(D-ribitylamino)uracil = 6,7-dimethyl-8-(1-D-ribityl)lumazine + phosphate + 2 H2O + H(+). Its pathway is cofactor biosynthesis; riboflavin biosynthesis; riboflavin from 2-hydroxy-3-oxobutyl phosphate and 5-amino-6-(D-ribitylamino)uracil: step 1/2. In terms of biological role, catalyzes the formation of 6,7-dimethyl-8-ribityllumazine by condensation of 5-amino-6-(D-ribitylamino)uracil with 3,4-dihydroxy-2-butanone 4-phosphate. This is the penultimate step in the biosynthesis of riboflavin. The protein is 6,7-dimethyl-8-ribityllumazine synthase of Buchnera aphidicola subsp. Schizaphis graminum (strain Sg).